Reading from the N-terminus, the 103-residue chain is Large ribosomal subunit protein uL24 (103 aa).

Belongs to the universal ribosomal protein uL24 family. In terms of assembly, part of the 50S ribosomal subunit.

In terms of biological role, one of two assembly initiator proteins, it binds directly to the 5'-end of the 23S rRNA, where it nucleates assembly of the 50S subunit. One of the proteins that surrounds the polypeptide exit tunnel on the outside of the subunit. In Mannheimia succiniciproducens (strain KCTC 0769BP / MBEL55E), this protein is Large ribosomal subunit protein uL24.